The chain runs to 406 residues: Tyrosine-protein phosphatase non-receptor type 2 (406 aa).

A Tyrosine-protein phosphatase domain is found at 5-275 (IEREFEELDA…RFSYMAIIEG (271 aa)). Tyrosine 22 bears the Phosphotyrosine mark. Serine 52 bears the Phosphoserine mark. Tyrosine 68 carries the phosphotyrosine modification. Substrate-binding positions include aspartate 182, 216 to 222 (CSAGIGR), and glutamine 260. Cysteine 216 functions as the Phosphocysteine intermediate in the catalytic mechanism. Position 216 is an S-nitrosocysteine (cysteine 216). Residues serine 293, serine 298, serine 304, serine 320, and serine 339 each carry the phosphoserine modification. The endoplasmic reticulum location stretch occupies residues 341-406 (ESILRKRIRE…ALVGWTLLFH (66 aa)). The interval 371 to 406 (ERKRKRWLYWQPILTKMGFVSVILVGALVGWTLLFH) is mediates interaction with STX17.

The protein belongs to the protein-tyrosine phosphatase family. Non-receptor class 1 subfamily. As to quaternary structure, interacts with RMDN3. Isoform 1 interacts with TMED9. Isoform 1 interacts with STX17; dephosphorylates STX17. Interacts with ITGA1 (via cytoplasmic domain); activates the phosphatase activity towards EGFR. Interacts with TRAF2; probably involved in tumor necrosis factor-mediated signaling. Interacts with MET. Interacts with FAM220A and STAT3; interaction with FAM220A promotes interaction of PTPN2 with transcriptional activator STAT3, leading to dephosphorylation of STAT3 by PTPN2 and negative regulation of STAT3 transcriptional activator activity. Post-translationally, specifically phosphorylated in a cell cycle-dependent manner by cyclin-dependent kinases CDK1 and CDK2. Probably activated through phosphorylation by PKR. As to expression, ubiquitously expressed. The highest expression levels were found in ovary, testis, thymus and kidney.

Its subcellular location is the endoplasmic reticulum. It is found in the endoplasmic reticulum-Golgi intermediate compartment. The protein localises to the nucleus. It localises to the cytoplasm. The protein resides in the cell membrane. The catalysed reaction is O-phospho-L-tyrosyl-[protein] + H2O = L-tyrosyl-[protein] + phosphate. Its function is as follows. Non-receptor type tyrosine-specific phosphatase that dephosphorylates receptor protein tyrosine kinases including INSR, EGFR, CSF1R, PDGFR. Also dephosphorylates non-receptor protein tyrosine kinases like JAK1, JAK2, JAK3, Src family kinases, STAT1, STAT3 and STAT6 either in the nucleus or the cytoplasm. Negatively regulates numerous signaling pathways and biological processes like hematopoiesis, inflammatory response, cell proliferation and differentiation, and glucose homeostasis. Plays a multifaceted and important role in the development of the immune system. Functions in T-cell receptor signaling through dephosphorylation of FYN and LCK to control T-cells differentiation and activation. Dephosphorylates CSF1R, negatively regulating its downstream signaling and macrophage differentiation. Negatively regulates cytokine (IL2/interleukin-2 and interferon)-mediated signaling through dephosphorylation of the cytoplasmic kinases JAK1, JAK3 and their substrate STAT1, that propagate signaling downstream of the cytokine receptors. Also regulates the IL6/interleukin-6 and IL4/interleukin-4 cytokine signaling through dephosphorylation of STAT3 and STAT6 respectively. In addition to the immune system, it is involved in anchorage-dependent, negative regulation of EGF-stimulated cell growth. Activated by the integrin ITGA1/ITGB1, it dephosphorylates EGFR and negatively regulates EGF signaling. Dephosphorylates PDGFRB and negatively regulates platelet-derived growth factor receptor-beta signaling pathway and therefore cell proliferation. Negatively regulates tumor necrosis factor-mediated signaling downstream via MAPK through SRC dephosphorylation. May also regulate the hepatocyte growth factor receptor signaling pathway through dephosphorylation of the hepatocyte growth factor receptor MET. Also plays an important role in glucose homeostasis. For instance, negatively regulates the insulin receptor signaling pathway through the dephosphorylation of INSR and control gluconeogenesis and liver glucose production through negative regulation of the IL6 signaling pathways. May also bind DNA. The sequence is that of Tyrosine-protein phosphatase non-receptor type 2 (Ptpn2) from Mus musculus (Mouse).